Consider the following 558-residue polypeptide: Protein SET DOMAIN GROUP 41 (558 aa).

Positions 115–249 constitute an SET domain; sequence PSISVAIHHA…SGEEITVSYI (135 aa).

Belongs to the class V-like SAM-binding methyltransferase superfamily.

In Arabidopsis thaliana (Mouse-ear cress), this protein is Protein SET DOMAIN GROUP 41 (SDG41).